The primary structure comprises 305 residues: UDP-3-O-acyl-N-acetylglucosamine deacetylase (305 aa).

Zn(2+)-binding residues include His78, His237, and Asp241. The active-site Proton donor is the His264.

The protein belongs to the LpxC family. Requires Zn(2+) as cofactor.

It carries out the reaction a UDP-3-O-[(3R)-3-hydroxyacyl]-N-acetyl-alpha-D-glucosamine + H2O = a UDP-3-O-[(3R)-3-hydroxyacyl]-alpha-D-glucosamine + acetate. Its pathway is glycolipid biosynthesis; lipid IV(A) biosynthesis; lipid IV(A) from (3R)-3-hydroxytetradecanoyl-[acyl-carrier-protein] and UDP-N-acetyl-alpha-D-glucosamine: step 2/6. In terms of biological role, catalyzes the hydrolysis of UDP-3-O-myristoyl-N-acetylglucosamine to form UDP-3-O-myristoylglucosamine and acetate, the committed step in lipid A biosynthesis. The polypeptide is UDP-3-O-acyl-N-acetylglucosamine deacetylase (Burkholderia mallei (strain NCTC 10247)).